Here is a 410-residue protein sequence, read N- to C-terminus: NADH-quinone oxidoreductase subunit H (410 aa).

Helical transmembrane passes span 11-31 (LVAA…LVAI), 79-99 (FVYF…FAFI), 119-139 (LPVA…GIVL), 160-180 (VISY…MAGT), 192-212 (GVWY…SMVG), 257-277 (ALAA…NMWA), 283-303 (WWPL…YFWL), 317-337 (ALGW…AAII), and 347-367 (YWTP…VLLL). Residues 376 to 410 (ARASARQRGDEGTSPEPAFPTPPLLAGATKENAGG) are disordered.

The protein belongs to the complex I subunit 1 family. As to quaternary structure, NDH-1 is composed of 14 different subunits. Subunits NuoA, H, J, K, L, M, N constitute the membrane sector of the complex.

It is found in the cell membrane. It carries out the reaction a quinone + NADH + 5 H(+)(in) = a quinol + NAD(+) + 4 H(+)(out). NDH-1 shuttles electrons from NADH, via FMN and iron-sulfur (Fe-S) centers, to quinones in the respiratory chain. The immediate electron acceptor for the enzyme in this species is believed to be menaquinone. Couples the redox reaction to proton translocation (for every two electrons transferred, four hydrogen ions are translocated across the cytoplasmic membrane), and thus conserves the redox energy in a proton gradient. This Mycobacterium bovis (strain ATCC BAA-935 / AF2122/97) protein is NADH-quinone oxidoreductase subunit H.